The chain runs to 369 residues: Core histone macro-H2A.1 (369 aa).

An N6-lactoyllysine; alternate mark is found at Lys-7 and Lys-9. The region spanning 15–90 (RSAKAGVIFP…ILLAVANDEE (76 aa)) is the Histone H2A domain. At Lys-18 the chain carries N6-methyllysine. The residue at position 116 (Lys-116) is an N6-acetyllysine; alternate. Lys-116 participates in a covalent cross-link: Glycyl lysine isopeptide (Lys-Gly) (interchain with G-Cter in ubiquitin); alternate. Lys-117 is covalently cross-linked (Glycyl lysine isopeptide (Lys-Gly) (interchain with G-Cter in ubiquitin)). Residue Lys-123 is modified to N6-acetyllysine; alternate. Lys-123 carries the N6,N6-dimethyllysine; alternate modification. Lys-123 participates in a covalent cross-link: Glycyl lysine isopeptide (Lys-Gly) (interchain with G-Cter in SUMO2); alternate. Positions 128 to 180 (ITPPPAKKAKSPSQKKTVSKKTGGKKGARKSKKKQGEVSKSASADSTTEGTPA) are disordered. Thr-129 carries the post-translational modification Phosphothreonine. Positions 144 to 160 (TVSKKTGGKKGARKSKK) are enriched in basic residues. Residues 165–177 (VSKSASADSTTEG) show a composition bias toward polar residues. Lys-167 participates in a covalent cross-link: Glycyl lysine isopeptide (Lys-Gly) (interchain with G-Cter in SUMO2). Ser-170 and Ser-173 each carry phosphoserine. Thr-178 is modified (phosphothreonine). Residues 184-367 (TVLSTKSLFL…IYVQEMAKLD (184 aa)) form the Macro domain. A Glycyl lysine isopeptide (Lys-Gly) (interchain with G-Cter in SUMO2) cross-link involves residue Lys-189. Residues Asp-203, Ile-204, Val-226, Ser-275, Gly-312, Ser-313, Gly-314, and Asn-316 each coordinate a glycoprotein. Residue Lys-320 forms a Glycyl lysine isopeptide (Lys-Gly) (interchain with G-Cter in SUMO2) linkage.

It belongs to the histone H2A family. The nucleosome is a histone octamer containing two molecules each of H2A, H2B, H3 and H4 assembled in one H3-H4 heterotetramer and two H2A-H2B heterodimers. Post-translationally, ADP-ribosylated. Monoubiquitinated at either Lys-116 or Lys-117. May also be polyubiquitinated. Ubiquitination is mediated by the CUL3/SPOP E3 complex and does not promote proteasomal degradation. Instead, it is required for enrichment in inactive X chromosome chromatin. Present in liver (at protein level).

The protein resides in the nucleus. It is found in the chromosome. In terms of biological role, variant histone H2A which replaces conventional H2A in a subset of nucleosomes where it represses transcription. Nucleosomes wrap and compact DNA into chromatin, limiting DNA accessibility to the cellular machineries which require DNA as a template. Histones thereby play a central role in transcription regulation, DNA repair, DNA replication and chromosomal stability. DNA accessibility is regulated via a complex set of post-translational modifications of histones, also called histone code, and nucleosome remodeling. Isoform that specifically binds poly-ADP-ribose and O-acetyl-ADP-ribose and plays a key role in NAD(+) metabolism. Able to bind to the ends of poly-ADP-ribose chains created by PARP1 and cap them. This prevents PARP1 from further addition of ADP-ribose and thus limits the consumption of nuclear NAD(+), allowing the cell to maintain proper NAD(+) levels in both the nucleus and the mitochondria to promote proper mitochondrial respiration. Its function is as follows. In contrast to isoform 1, does not bind poly-ADP-ribose. This chain is Core histone macro-H2A.1, found in Gallus gallus (Chicken).